The chain runs to 601 residues: Threonine dehydratase (601 aa).

A chloroplast-targeting transit peptide spans 1-51; sequence MEVLCQAPAGNSNFACNPKFTAIRTRAISSNDTFKVISSTGNNKKMKGAIR. 2 ACT-like domains span residues 427–499 and 521–592; these read ALLA…NLTN and IFCQ…IESL.

The protein belongs to the serine/threonine dehydratase family. The cofactor is pyridoxal 5'-phosphate.

The protein resides in the plastid. Its subcellular location is the chloroplast. The enzyme catalyses L-threonine = 2-oxobutanoate + NH4(+). Its pathway is amino-acid biosynthesis; L-isoleucine biosynthesis; 2-oxobutanoate from L-threonine: step 1/1. Functionally, catalyzes the conversion of threonine to alpha-keto butyrate in isoleucine (Ile) biosynthesis. Required for JA-Ile biosynthesis, a signaling molecule involved in defense and resistance to the herbivore Manduca sexta caterpillars. In Nicotiana attenuata (Coyote tobacco), this protein is Threonine dehydratase.